The following is an 859-amino-acid chain: DNA mismatch repair protein MutS (859 aa).

Residue 618–625 (GPNMGGKS) participates in ATP binding.

This sequence belongs to the DNA mismatch repair MutS family.

Functionally, this protein is involved in the repair of mismatches in DNA. It is possible that it carries out the mismatch recognition step. This protein has a weak ATPase activity. This Shewanella sediminis (strain HAW-EB3) protein is DNA mismatch repair protein MutS.